We begin with the raw amino-acid sequence, 314 residues long: Olfactory receptor 4K2 (314 aa).

Over 1 to 25 (MDVGNKSTMSEFVLLGLSNSWELQM) the chain is Extracellular. An N-linked (GlcNAc...) asparagine glycan is attached at Asn5. Residues 26–49 (FFFMVFSLLYVATMVGNSLIVITV) traverse the membrane as a helical segment. Residues 50–57 (IVDPHLHS) are Cytoplasmic-facing. The chain crosses the membrane as a helical span at residues 58–79 (PMYFLLTNLSIIDMSLASFATP). At 80 to 100 (KMITDYLTGHKTISFDGCLTQ) the chain is on the extracellular side. A disulfide bond links Cys97 and Cys189. A helical membrane pass occupies residues 101–120 (IFFLHLFTGTEIILLMAMSF). Topologically, residues 121–139 (DRYIAICKPLHYASVISPQ) are cytoplasmic. The chain crosses the membrane as a helical span at residues 140 to 158 (VCVALVVASWIMGVMHSMS). The Extracellular portion of the chain corresponds to 159-195 (QVIFALTLPFCGPYEVDSFFCDLPVVFQLACVDTYVL). The helical transmembrane segment at 196-219 (GLFMISTSGIIALSCFIVLFNSYV) threads the bilayer. Over 220–235 (IVLVTVKHHSSRGSSK) the chain is Cytoplasmic. The helical transmembrane segment at 236-258 (ALSTCTAHFIVVFLFFGPCIFIY) threads the bilayer. Over 259 to 269 (MWPLSSFLTDK) the chain is Extracellular. Residues 270 to 289 (ILSVFYTIFTPTLNPIIYTL) traverse the membrane as a helical segment. The Cytoplasmic portion of the chain corresponds to 290–314 (RNQEVKIAMRKLKNRFLNFNKAMPS).

The protein belongs to the G-protein coupled receptor 1 family.

The protein resides in the cell membrane. Odorant receptor. This Homo sapiens (Human) protein is Olfactory receptor 4K2 (OR4K2).